A 465-amino-acid polypeptide reads, in one-letter code: Ribulose bisphosphate carboxylase large chain (465 aa).

K4 carries the N6,N6,N6-trimethyllysine modification. The substrate site is built by N113 and T163. K165 (proton acceptor) is an active-site residue. K167 is a binding site for substrate. Mg(2+) contacts are provided by K191, D193, and E194. K191 is modified (N6-carboxylysine). H284 serves as the catalytic Proton acceptor. The substrate site is built by R285, H317, and S369.

Belongs to the RuBisCO large chain family. Type I subfamily. As to quaternary structure, heterohexadecamer of 8 large chains and 8 small chains; disulfide-linked. The disulfide link is formed within the large subunit homodimers. Mg(2+) serves as cofactor. In terms of processing, the disulfide bond which can form in the large chain dimeric partners within the hexadecamer appears to be associated with oxidative stress and protein turnover.

The protein resides in the plastid. Its subcellular location is the chloroplast. It carries out the reaction 2 (2R)-3-phosphoglycerate + 2 H(+) = D-ribulose 1,5-bisphosphate + CO2 + H2O. The catalysed reaction is D-ribulose 1,5-bisphosphate + O2 = 2-phosphoglycolate + (2R)-3-phosphoglycerate + 2 H(+). In terms of biological role, ruBisCO catalyzes two reactions: the carboxylation of D-ribulose 1,5-bisphosphate, the primary event in carbon dioxide fixation, as well as the oxidative fragmentation of the pentose substrate in the photorespiration process. Both reactions occur simultaneously and in competition at the same active site. This is Ribulose bisphosphate carboxylase large chain from Cornus canadensis (Bunchberry dogwood).